Here is a 1194-residue protein sequence, read N- to C-terminus: F-box only protein 38 (1194 aa).

An F-box domain is found at 30 to 75 (MNQLSHEVLCHIFRYLPLQDIMCMECLSRKLKEAVTLYLRVVRVVD). The segment at 59–119 (KLKEAVTLYL…LHPRYLERRR (61 aa)) is interaction with KLF7. 3 short sequence motifs (nuclear export signal) span residues 194–201 (LHLVGVNV), 307–316 (LEVDLGYLII), and 451–460 (LLPSLEFISL). 4 disordered regions span residues 487-529 (ALVS…FRPD), 577-776 (EEQA…DAES), 793-879 (RTGR…RARS), and 896-915 (KPCH…STSD). Residues 493 to 510 (NSNNDNDNNAPNNNANLH) show a composition bias toward low complexity. Residue Thr-592 is modified to Phosphothreonine. Ser-599, Ser-601, and Ser-607 each carry phosphoserine. The span at 599–609 (SESDDEEDSLE) shows a compositional bias: acidic residues. Composition is skewed to basic and acidic residues over residues 622-631 (RYSEREEKTG) and 683-701 (IKAD…KSKD). Residues 705–728 (SCSSSSSSTAASTAGNASSPSTAS) are compositionally biased toward low complexity. A phosphoserine mark is found at Ser-742 and Ser-746. Positions 764-774 (EDSEAMEEGDA) are enriched in acidic residues. Residues 793-804 (RTGRCSDEERPS) are compositionally biased toward basic and acidic residues. A compositionally biased stretch (polar residues) spans 855–867 (SSQPESCDVQSNE). Positions 896 to 906 (KPCHAMKRKRT) are enriched in basic residues. Residues 902-905 (KRKR) carry the Nuclear localization signal motif.

In terms of assembly, part of the SCF (SKP1-CUL1-F-box) E3 ubiquitin-protein ligase complex SCF(FBXO38) composed of CUL1, SKP1, RBX1 and FBXO38. Interacts with KLF7. Interacts with PDCD1/PD-1. Expressed at high levels in embryo (developing brain, spinal cord, branchial arms and limbs). Widely expressed at low levels in adult tissues, with highest expression in testis. Expressed in postmeiotic spermatids.

Its subcellular location is the cytoplasm. It is found in the cytosol. It localises to the nucleus. Its pathway is protein modification; protein ubiquitination. In terms of biological role, substrate recognition component of a SCF (SKP1-CUL1-F-box protein) E3 ubiquitin-protein ligase complex which mediates the ubiquitination and subsequent proteasomal degradation of PDCD1/PD-1, thereby regulating T-cells-mediated immunity. Required for anti-tumor activity of T-cells by promoting the degradation of PDCD1/PD-1; the PDCD1-mediated inhibitory pathway being exploited by tumors to attenuate anti-tumor immunity and facilitate tumor survival. May indirectly stimulate the activity of transcription factor KLF7, a regulator of neuronal differentiation, without promoting KLF7 ubiquitination. The sequence is that of F-box only protein 38 from Mus musculus (Mouse).